Reading from the N-terminus, the 360-residue chain is MSLTRLNIEAFRNIQFAQLIPAPGINVIYGQNGSGKTSILEAIYFLGMGRSFRSHLSQRVINNDNDKLTLFATLNLARGDSKIGLRRFRSGETEVKIDGEKVKRLSTLAETLPIQVITPESFSLLFEGPKSRRQFIDWGAFHADPQFYGAWTNVRRVIKQRNQLLRNGAVYTHIQFWDQEFVRYAEQVTEIRNHYVDSLNGLLKGIIGEFLPSVDVKVSFTRGWDSKTDFAELLENQYSRDLATGHTVSGPHKADLRLRVGNLPAQDALSRGQLKLLVCALRIAQGKLLKQQIDKHSIYLVDDLPSELDAQHRQLLLKQLTDTGAQVFVTAIDPAAIVDSLHTPPNRMFHVEQGRVTVVE.

30 to 37 is a binding site for ATP; it reads GQNGSGKT.

This sequence belongs to the RecF family.

Its subcellular location is the cytoplasm. Functionally, the RecF protein is involved in DNA metabolism; it is required for DNA replication and normal SOS inducibility. RecF binds preferentially to single-stranded, linear DNA. It also seems to bind ATP. The chain is DNA replication and repair protein RecF from Shewanella putrefaciens (strain CN-32 / ATCC BAA-453).